The chain runs to 504 residues: ATP synthase subunit alpha (504 aa).

Gly171–Thr178 lines the ATP pocket.

It belongs to the ATPase alpha/beta chains family. As to quaternary structure, F-type ATPases have 2 components, CF(1) - the catalytic core - and CF(0) - the membrane proton channel. CF(1) has five subunits: alpha(3), beta(3), gamma(1), delta(1), epsilon(1). CF(0) has three main subunits: a(1), b(2) and c(9-12). The alpha and beta chains form an alternating ring which encloses part of the gamma chain. CF(1) is attached to CF(0) by a central stalk formed by the gamma and epsilon chains, while a peripheral stalk is formed by the delta and b chains.

The protein resides in the cell inner membrane. The enzyme catalyses ATP + H2O + 4 H(+)(in) = ADP + phosphate + 5 H(+)(out). Produces ATP from ADP in the presence of a proton gradient across the membrane. The alpha chain is a regulatory subunit. This is ATP synthase subunit alpha from Sulfurovum sp. (strain NBC37-1).